A 114-amino-acid chain; its full sequence is Large ribosomal subunit protein uL18 (114 aa).

It belongs to the universal ribosomal protein uL18 family. Part of the 50S ribosomal subunit; part of the 5S rRNA/L5/L18/L25 subcomplex. Contacts the 5S and 23S rRNAs.

In terms of biological role, this is one of the proteins that bind and probably mediate the attachment of the 5S RNA into the large ribosomal subunit, where it forms part of the central protuberance. In Porphyromonas gingivalis (strain ATCC BAA-308 / W83), this protein is Large ribosomal subunit protein uL18.